The following is a 333-amino-acid chain: Fructose-1,6-bisphosphatase class 1 (333 aa).

Residues Glu92, Asp113, Leu115, and Asp116 each coordinate Mg(2+). Substrate contacts are provided by residues Asp116–Ser119, Asn209, Tyr242, and Lys272. Glu278 is a Mg(2+) binding site.

The protein belongs to the FBPase class 1 family. In terms of assembly, homotetramer. The cofactor is Mg(2+).

It is found in the cytoplasm. It catalyses the reaction beta-D-fructose 1,6-bisphosphate + H2O = beta-D-fructose 6-phosphate + phosphate. The protein operates within carbohydrate biosynthesis; Calvin cycle. This is Fructose-1,6-bisphosphatase class 1 from Pelodictyon phaeoclathratiforme (strain DSM 5477 / BU-1).